A 66-amino-acid chain; its full sequence is Large ribosomal subunit protein eL29 (66 aa).

The segment covering 1–14 (MAKSKNSTNKNQIS) has biased composition (polar residues). Residues 1-66 (MAKSKNSTNK…KNLEKKVNKE (66 aa)) form a disordered region. Positions 15-31 (KSHRNGIKKPKDHRHIS) are enriched in basic residues. Residues 47–66 (IKNDPSIKKSKNLEKKVNKE) show a composition bias toward basic and acidic residues.

It belongs to the eukaryotic ribosomal protein eL29 family.

Its subcellular location is the cytoplasm. The protein is Large ribosomal subunit protein eL29 (RPL29) of Tetrahymena thermophila.